A 182-amino-acid chain; its full sequence is Large ribosomal subunit protein uL6 (182 aa).

The protein belongs to the universal ribosomal protein uL6 family. Part of the 50S ribosomal subunit.

Functionally, this protein binds to the 23S rRNA, and is important in its secondary structure. It is located near the subunit interface in the base of the L7/L12 stalk, and near the tRNA binding site of the peptidyltransferase center. The sequence is that of Large ribosomal subunit protein uL6 from Dehalococcoides mccartyi (strain ATCC BAA-2266 / KCTC 15142 / 195) (Dehalococcoides ethenogenes (strain 195)).